The primary structure comprises 684 residues: MGLPPLQTQPGTFLVALGLCCWLLATANAHNCQHQHPKAHEVVHGVRIQLADSDDDDAAGSSDAAVHSVRRRSVTAEQPLRILLVYDDSVYRLEEEKFNLINDTVLPEAVQFWEQALMVRETKGIIRLNRKCDSTQVYVKNGHTHCIDQCKATTMCGEVQVPNEHLDVCRVCNATGQNCRIDSNTQPGDGIQNADFVFYVSARQTQRCFKGLTVAYAAHCQQEAALDRPIAGHANLCPESISTKPQELQTLISTVKHEILHALGFSVSLYAFFRDDEGRPRTPRKSETGKPFLNEKLQIHQWSNETIRKVVRENWSVRGGHVNKEVDMMVTPRVVAEARAHFDCDKLEGAELEDQGGEGTALTHWEKRILENEAMTGTHTQSPVFSRITLALMEDSGWYRANYSMATPLSWGKGLGCSFAMRSCKDWIQMNHARGRSIHPFCSKVKQDPLQTECTDDRNSVALCNLIRHDYELPKSYQNFDSLQNVKSGEEGFYGGSVSLADHCPYIQEFTWRSKNIIVRGSHCRFVENNPKPEKNFALESYGHGSKCFDHSEAMWEERSCHQTREWQHWGSGCYKYTCFDGRLHILVGNYTYKCSFPGQKLSIRIAANGWLHKGAIMCPPCHELCGSHFAAQGKQCRPGEEADPLNKYPRDNLACGAESRQQRSVAIISAALLLAAGLRLGHS.

His-257 serves as a coordination point for Zn(2+). Residue Glu-258 is part of the active site. Positions 261 and 364 each coordinate Zn(2+).

This sequence belongs to the peptidase M8 family. Zn(2+) is required as a cofactor.

The protein resides in the cytoplasm. Its function is as follows. Essential for the coordination of mitotic progression, and also plays a role in cell migration. The protein is Leishmanolysin-like peptidase of Drosophila pseudoobscura pseudoobscura (Fruit fly).